A 347-amino-acid chain; its full sequence is Histidinol-phosphate aminotransferase (347 aa).

An N6-(pyridoxal phosphate)lysine modification is found at Lys209.

It belongs to the class-II pyridoxal-phosphate-dependent aminotransferase family. Histidinol-phosphate aminotransferase subfamily. In terms of assembly, homodimer. Requires pyridoxal 5'-phosphate as cofactor.

The catalysed reaction is L-histidinol phosphate + 2-oxoglutarate = 3-(imidazol-4-yl)-2-oxopropyl phosphate + L-glutamate. It participates in amino-acid biosynthesis; L-histidine biosynthesis; L-histidine from 5-phospho-alpha-D-ribose 1-diphosphate: step 7/9. This Geotalea daltonii (strain DSM 22248 / JCM 15807 / FRC-32) (Geobacter daltonii) protein is Histidinol-phosphate aminotransferase.